The sequence spans 162 residues: NADH-quinone oxidoreductase subunit I (162 aa).

2 consecutive 4Fe-4S ferredoxin-type domains span residues 53–83 (LRRYPNGEERCIACKLCEAVCPAQAITIESE) and 93–122 (TRYDIDMTKCIYCGFCQEACPVDAIVEGPN). Residues C63, C66, C69, C73, C102, C105, C108, and C112 each coordinate [4Fe-4S] cluster.

The protein belongs to the complex I 23 kDa subunit family. NDH-1 is composed of 14 different subunits. Subunits NuoA, H, J, K, L, M, N constitute the membrane sector of the complex. [4Fe-4S] cluster serves as cofactor.

The protein localises to the cell inner membrane. The enzyme catalyses a quinone + NADH + 5 H(+)(in) = a quinol + NAD(+) + 4 H(+)(out). Functionally, NDH-1 shuttles electrons from NADH, via FMN and iron-sulfur (Fe-S) centers, to quinones in the respiratory chain. The immediate electron acceptor for the enzyme in this species is believed to be ubiquinone. Couples the redox reaction to proton translocation (for every two electrons transferred, four hydrogen ions are translocated across the cytoplasmic membrane), and thus conserves the redox energy in a proton gradient. In Erythrobacter litoralis (strain HTCC2594), this protein is NADH-quinone oxidoreductase subunit I.